The chain runs to 396 residues: Digeranylgeranylglycerophospholipid reductase 2 (396 aa).

The FAD site is built by A13, E32, C43, A44, G46, R92, A116, D278, G290, and L291.

The protein belongs to the geranylgeranyl reductase family. DGGGPL reductase subfamily. It depends on FAD as a cofactor.

The enzyme catalyses a 2,3-bis-O-phytanyl-sn-glycerol 1-phospholipid + 8 A = a 2,3-bis-O-(geranylgeranyl)-sn-glycerol 1-phospholipid + 8 AH2. The catalysed reaction is 2,3-bis-O-(phytanyl)-sn-glycerol 1-phosphate + 8 A = 2,3-bis-O-(geranylgeranyl)-sn-glycerol 1-phosphate + 8 AH2. It catalyses the reaction CDP-2,3-bis-O-(geranylgeranyl)-sn-glycerol + 8 AH2 = CDP-2,3-bis-O-(phytanyl)-sn-glycerol + 8 A. It carries out the reaction archaetidylserine + 8 AH2 = 2,3-bis-O-phytanyl-sn-glycero-3-phospho-L-serine + 8 A. The protein operates within membrane lipid metabolism; glycerophospholipid metabolism. In terms of biological role, is involved in the reduction of 2,3-digeranylgeranylglycerophospholipids (unsaturated archaeols) into 2,3-diphytanylglycerophospholipids (saturated archaeols) in the biosynthesis of archaeal membrane lipids. Catalyzes the formation of archaetidic acid (2,3-di-O-phytanyl-sn-glyceryl phosphate) from 2,3-di-O-geranylgeranylglyceryl phosphate (DGGGP) via the hydrogenation of each double bond of the isoprenoid chains. Is also probably able to reduce double bonds of geranyl groups in CDP-2,3-bis-O-(geranylgeranyl)-sn-glycerol and archaetidylserine, thus acting at various stages in the biosynthesis of archaeal membrane lipids. In Methanopyrus kandleri (strain AV19 / DSM 6324 / JCM 9639 / NBRC 100938), this protein is Digeranylgeranylglycerophospholipid reductase 2.